A 456-amino-acid polypeptide reads, in one-letter code: Adenylyltransferase and sulfurtransferase uba4 (456 aa).

ATP contacts are provided by residues glycine 101, aspartate 122, 129 to 133 (SNLHR), lysine 146, and 161 to 162 (DH). Residues cysteine 210 and cysteine 213 each contribute to the Zn(2+) site. Residue cysteine 227 is the Glycyl thioester intermediate; for adenylyltransferase activity of the active site. Zn(2+) contacts are provided by cysteine 300 and cysteine 303. In terms of domain architecture, Rhodanese spans 350 to 454 (KEKEHLLIDV…WKEQVDGSWP (105 aa)). Cysteine 409 acts as the Cysteine persulfide intermediate; for sulfurtransferase activity in catalysis.

It in the N-terminal section; belongs to the HesA/MoeB/ThiF family. UBA4 subfamily. Zn(2+) serves as cofactor.

The protein resides in the cytoplasm. Its subcellular location is the cytosol. The enzyme catalyses [molybdopterin-synthase sulfur-carrier protein]-C-terminal Gly-Gly + ATP + H(+) = [molybdopterin-synthase sulfur-carrier protein]-C-terminal Gly-Gly-AMP + diphosphate. The catalysed reaction is [molybdopterin-synthase sulfur-carrier protein]-C-terminal Gly-Gly-AMP + S-sulfanyl-L-cysteinyl-[cysteine desulfurase] + AH2 = [molybdopterin-synthase sulfur-carrier protein]-C-terminal-Gly-aminoethanethioate + L-cysteinyl-[cysteine desulfurase] + A + AMP + 2 H(+). It functions in the pathway tRNA modification; 5-methoxycarbonylmethyl-2-thiouridine-tRNA biosynthesis. Plays a central role in 2-thiolation of mcm(5)S(2)U at tRNA wobble positions of cytosolic tRNA(Lys), tRNA(Glu) and tRNA(Gln). Also essential during biosynthesis of the molybdenum cofactor. Acts by mediating the C-terminal thiocarboxylation of sulfur carriers urm1 and mocs2a. Its N-terminus first activates urm1 and mocs2a as acyl-adenylates (-COAMP), then the persulfide sulfur on the catalytic cysteine is transferred to urm1 and mocs2a to form thiocarboxylation (-COSH) of their C-terminus. The reaction probably involves hydrogen sulfide that is generated from the persulfide intermediate and that acts as a nucleophile towards urm1 and mocs2a. Subsequently, a transient disulfide bond is formed. Does not use thiosulfate as sulfur donor; nfs1 probably acting as a sulfur donor for thiocarboxylation reactions. The sequence is that of Adenylyltransferase and sulfurtransferase uba4 from Sclerotinia sclerotiorum (strain ATCC 18683 / 1980 / Ss-1) (White mold).